Reading from the N-terminus, the 812-residue chain is Lon protease (812 aa).

In terms of domain architecture, Lon N-terminal spans 22–215 (YAVLPLRDIV…KALSFMEAEI (194 aa)). ATP is bound at residue 367 to 374 (GPPGVGKT). A Lon proteolytic domain is found at 602 to 783 (EDQVGVVTGL…GEVLKHTLVR (182 aa)). Residues serine 689 and lysine 732 contribute to the active site. A disordered region spans residues 787–812 (PIEWTEQENPTAVPPVEDEAGASLAH).

Belongs to the peptidase S16 family. As to quaternary structure, homohexamer. Organized in a ring with a central cavity.

The protein localises to the cytoplasm. It catalyses the reaction Hydrolysis of proteins in presence of ATP.. In terms of biological role, ATP-dependent serine protease that mediates the selective degradation of mutant and abnormal proteins as well as certain short-lived regulatory proteins. Required for cellular homeostasis and for survival from DNA damage and developmental changes induced by stress. Degrades polypeptides processively to yield small peptide fragments that are 5 to 10 amino acids long. Binds to DNA in a double-stranded, site-specific manner. The protein is Lon protease of Brucella suis biovar 1 (strain 1330).